The sequence spans 360 residues: D-alanine--D-alanine ligase (360 aa).

Residues 146–352 (KLCVADAGIA…YRNLITRLLE (207 aa)) enclose the ATP-grasp domain. 179–234 (EAQVSYPLFVKPASLGSSIGISKVHNREELHPALQAACALDWKVVVESTVKGREIE) provides a ligand contact to ATP. Mg(2+)-binding residues include D305, E319, and N321.

The protein belongs to the D-alanine--D-alanine ligase family. It depends on Mg(2+) as a cofactor. Mn(2+) serves as cofactor.

The protein localises to the cytoplasm. The enzyme catalyses 2 D-alanine + ATP = D-alanyl-D-alanine + ADP + phosphate + H(+). Its pathway is cell wall biogenesis; peptidoglycan biosynthesis. Cell wall formation. This chain is D-alanine--D-alanine ligase, found in Chlorobium chlorochromatii (strain CaD3).